The following is a 348-amino-acid chain: UDP-N-acetyl-alpha-D-glucosaminouronate 4-epimerase (348 aa).

Residues Phe-26, Ile-27, Asp-46, Thr-50, Gly-51, Asp-77, Ile-78, Gln-97, Tyr-165, Lys-169, and Val-195 each contribute to the NAD(+) site. The active-site Proton acceptor is the Tyr-165.

The protein belongs to the NAD(P)-dependent epimerase/dehydratase family. Homodimer. NAD(+) is required as a cofactor.

The catalysed reaction is UDP-2-acetamido-2-deoxy-alpha-D-glucuronate = UDP-2-acetamido-2-deoxy-alpha-D-galacturonate. It catalyses the reaction UDP-N-acetyl-alpha-D-glucosamine = UDP-N-acetyl-alpha-D-galactosamine. Its pathway is capsule biogenesis; capsule polysaccharide biosynthesis. The protein operates within glycan metabolism; Vi-antigen biosynthesis. Functionally, epimerase required for the biosynthesis of the capsular polysaccharide, commonly referred as the Vi antigen, an important virulence factor. Catalyzes the reversible epimerization of UDP-N-acetylglucosaminuronic acid (UDP-GlcNAcA) to UDP-N-acetylgalactosaminuronic acid (UDP-GalNAcA). Also catalyzes, with lower efficiency, the reversible epimerization of UDP-N-acetylglucosamine (UDP-GlcNAc) to UDP-N-acetylgalactosamine (UDP-GalNAc). Cannot use UDP-glucose (UDP-Glc) and UDP-galactose (UDP-Gal) as substrates. The sequence is that of UDP-N-acetyl-alpha-D-glucosaminouronate 4-epimerase from Salmonella typhi.